Consider the following 414-residue polypeptide: Succinylornithine transaminase (414 aa).

Lys-260 is subject to N6-(pyridoxal phosphate)lysine.

Belongs to the class-III pyridoxal-phosphate-dependent aminotransferase family. AstC subfamily. Requires pyridoxal 5'-phosphate as cofactor.

It catalyses the reaction N(2)-succinyl-L-ornithine + 2-oxoglutarate = N-succinyl-L-glutamate 5-semialdehyde + L-glutamate. It functions in the pathway amino-acid degradation; L-arginine degradation via AST pathway; L-glutamate and succinate from L-arginine: step 3/5. In terms of biological role, catalyzes the transamination of N(2)-succinylornithine and alpha-ketoglutarate into N(2)-succinylglutamate semialdehyde and glutamate. Can also act as an acetylornithine aminotransferase. The protein is Succinylornithine transaminase of Yersinia pestis bv. Antiqua (strain Antiqua).